We begin with the raw amino-acid sequence, 146 residues long: Cytochrome b5 type B (146 aa).

The propeptide occupies 1 to 11 (MATPEASGSGR). The Cytochrome b5 heme-binding domain occupies 20-96 (VTYYRLEEVA…LKQYYIGDVH (77 aa)). At Lys30 the chain carries N6-acetyllysine. Residues His55 and His79 each coordinate heme. Residue Ser80 is modified to Phosphoserine. The chain crosses the membrane as a helical span at residues 119–136 (WAYWIVPIVGAILIGFLY).

It belongs to the cytochrome b5 family. As to quaternary structure, component of a complex composed of cytochrome b5, NADH-cytochrome b5 reductase (CYB5R3) and MTARC2.

Its subcellular location is the mitochondrion outer membrane. In terms of biological role, cytochrome b5 is a membrane-bound hemoprotein functioning as an electron carrier for several membrane-bound oxygenases. The sequence is that of Cytochrome b5 type B (Cyb5b) from Rattus norvegicus (Rat).